Here is an 887-residue protein sequence, read N- to C-terminus: Translation initiation factor IF-2 (887 aa).

The interval 1-291 (MTDQADTSER…RRRVERERKK (291 aa)) is disordered. Residues 58 to 117 (AAPAAAPAAAPAAAEEVAKKPVAAPEVKPAAPVEERPAPVAKAAPEVKAVPAPAPAAAPA) show a composition bias toward low complexity. Composition is skewed to basic and acidic residues over residues 148–178 (SAREREGEDRRRAEEEARRFAEEDARREAER), 185–194 (AAEEASRHTA), 201–215 (RAAEEAKRRLDDDRP), and 267–276 (AFDDESERQR). One can recognise a tr-type G domain in the interval 385–553 (ARAPVVTVMG…TILLQAELLD (169 aa)). The interval 394-401 (GHVDHGKT) is G1. 394–401 (GHVDHGKT) is a binding site for GTP. The segment at 419–423 (GITQH) is G2. The segment at 441–444 (DTPG) is G3. Residues 441-445 (DTPGH) and 495-498 (NKMD) each bind GTP. The G4 stretch occupies residues 495–498 (NKMD). The segment at 531-533 (SAK) is G5.

It belongs to the TRAFAC class translation factor GTPase superfamily. Classic translation factor GTPase family. IF-2 subfamily.

Its subcellular location is the cytoplasm. In terms of biological role, one of the essential components for the initiation of protein synthesis. Protects formylmethionyl-tRNA from spontaneous hydrolysis and promotes its binding to the 30S ribosomal subunits. Also involved in the hydrolysis of GTP during the formation of the 70S ribosomal complex. The protein is Translation initiation factor IF-2 of Parvibaculum lavamentivorans (strain DS-1 / DSM 13023 / NCIMB 13966).